The sequence spans 230 residues: 5'-methylthioadenosine/S-adenosylhomocysteine nucleosidase (230 aa).

Catalysis depends on Glu-12, which acts as the Proton acceptor. Residues Gly-78, Met-153, and 174-175 each bind substrate; that span reads ME. Residue Asp-198 is the Proton donor of the active site.

This sequence belongs to the PNP/UDP phosphorylase family. MtnN subfamily.

It carries out the reaction S-adenosyl-L-homocysteine + H2O = S-(5-deoxy-D-ribos-5-yl)-L-homocysteine + adenine. The catalysed reaction is S-methyl-5'-thioadenosine + H2O = 5-(methylsulfanyl)-D-ribose + adenine. The enzyme catalyses 5'-deoxyadenosine + H2O = 5-deoxy-D-ribose + adenine. It functions in the pathway amino-acid biosynthesis; L-methionine biosynthesis via salvage pathway; S-methyl-5-thio-alpha-D-ribose 1-phosphate from S-methyl-5'-thioadenosine (hydrolase route): step 1/2. In terms of biological role, catalyzes the irreversible cleavage of the glycosidic bond in both 5'-methylthioadenosine (MTA) and S-adenosylhomocysteine (SAH/AdoHcy) to adenine and the corresponding thioribose, 5'-methylthioribose and S-ribosylhomocysteine, respectively. Also cleaves 5'-deoxyadenosine, a toxic by-product of radical S-adenosylmethionine (SAM) enzymes, into 5-deoxyribose and adenine. This Lysinibacillus sphaericus (strain C3-41) protein is 5'-methylthioadenosine/S-adenosylhomocysteine nucleosidase.